The primary structure comprises 229 residues: Ribonuclease 3 (229 aa).

Residues 4-133 enclose the RNase III domain; the sequence is WEELQESVGF…FIGALYLDNG (130 aa). Glutamate 46 contacts Mg(2+). Residue aspartate 50 is part of the active site. Mg(2+) is bound by residues aspartate 119 and glutamate 122. The active site involves glutamate 122. The region spanning 159 to 228 is the DRBM domain; the sequence is DYKTQLQEIV…AQFAINQLTH (70 aa).

Belongs to the ribonuclease III family. In terms of assembly, homodimer. Requires Mg(2+) as cofactor.

It localises to the cytoplasm. It carries out the reaction Endonucleolytic cleavage to 5'-phosphomonoester.. Digests double-stranded RNA. Involved in the processing of primary rRNA transcript to yield the immediate precursors to the large and small rRNAs (23S and 16S). Processes some mRNAs, and tRNAs when they are encoded in the rRNA operon. Processes pre-crRNA and tracrRNA of type II CRISPR loci if present in the organism. This is Ribonuclease 3 from Listeria monocytogenes serotype 4a (strain HCC23).